The following is a 626-amino-acid chain: Elongation factor 4 (626 aa).

Residues 14–195 (SLIRNFCIIA…RIVVDVPAPT (182 aa)) form the tr-type G domain. GTP-binding positions include 26–31 (DHGKST) and 142–145 (NKID). The segment at 603-626 (LSTGEGGNDRDTKDKIRAAQKSEG) is disordered. A compositionally biased stretch (basic and acidic residues) spans 609-626 (GNDRDTKDKIRAAQKSEG).

It belongs to the TRAFAC class translation factor GTPase superfamily. Classic translation factor GTPase family. LepA subfamily.

The protein resides in the cell membrane. The enzyme catalyses GTP + H2O = GDP + phosphate + H(+). In terms of biological role, required for accurate and efficient protein synthesis under certain stress conditions. May act as a fidelity factor of the translation reaction, by catalyzing a one-codon backward translocation of tRNAs on improperly translocated ribosomes. Back-translocation proceeds from a post-translocation (POST) complex to a pre-translocation (PRE) complex, thus giving elongation factor G a second chance to translocate the tRNAs correctly. Binds to ribosomes in a GTP-dependent manner. The protein is Elongation factor 4 of Bifidobacterium animalis subsp. lactis (strain AD011).